Consider the following 135-residue polypeptide: uncharacterized protein (135 aa).

This is an uncharacterized protein from Archaeoglobus fulgidus (strain ATCC 49558 / DSM 4304 / JCM 9628 / NBRC 100126 / VC-16).